Reading from the N-terminus, the 835-residue chain is Outer membrane usher protein FasD (835 aa).

An N-terminal signal peptide occupies residues methionine 1 to alanine 21. The cysteines at positions 810 and 834 are disulfide-linked.

It belongs to the fimbrial export usher family.

It localises to the cell outer membrane. Its function is as follows. Involved in the export and assembly of the 987P fimbriae subunits across the outer membrane. The chain is Outer membrane usher protein FasD (fasD) from Escherichia coli.